The sequence spans 259 residues: Methyltransferase sdnD (259 aa).

The protein belongs to the FkbM methyltransferase family.

Its pathway is antibiotic biosynthesis. Functionally, methyltransferase; part of the gene cluster that mediates the biosynthesis of sordarin and hypoxysordarin, glycoside antibiotics with a unique tetracyclic diterpene aglycone structure. First, the geranylgeranyl diphosphate synthase sdnC constructs GGDP from farnesyl diphosphate and isopentenyl diphosphate. The diterpene cyclase sdnA then catalyzes the cyclization of GGDP to afford cycloaraneosene. Cycloaraneosene is then hydroxylated four times by the putative cytochrome P450 monooxygenases sdnB, sdnE, sdnF and sdnH to give a hydroxylated cycloaraneosene derivative such as cycloaraneosene-8,9,13,19-tetraol. Although the order of the hydroxylations is unclear, at least C8, C9 and C13 of the cycloaraneosene skeleton are hydroxylated before the sordaricin formation. Dehydration of the 13-hydroxy group of the hydroxylated cycloaraneosene derivative might be catalyzed by an unassigned hypothetical protein such as sdnG and sdnP to construct the cyclopentadiene moiety. The FAD-dependent oxidoreductase sdnN is proposed to catalyze the oxidation at C9 of the hydroxylated cycloaraneosene derivative and also catalyze the Baeyer-Villiger oxidation to give the lactone intermediate. The presumed lactone intermediate would be hydrolyzed to give an acrolein moiety and a carboxylate moiety. Then, [4+2]cycloaddition would occur between the acrolein moiety and the cyclopentadiene moiety to give sordaricin. SdnN might also be involved in the [4+2]cycloaddition after the hypothesized oxidation to accommodate the oxidized product and prompt the [4+2]cycloaddition. GDP-6-deoxy-D-altrose may be biosynthesized from GDP-D-mannose by the putative GDP-mannose-4,6-dehydratase sdnI and the short-chain dehydrogenase sdnK. The glycosyltransferase sdnJ catalyzes the attachment of 6-deoxy-D-altrose onto the 19-hydroxy group of sordaricin to give 4'-O-demethylsordarin. The methyltransferase sdnD would complete the biosynthesis of sordarin. Sordarin can be further modified into hypoxysordarin. The unique acyl chain at the 3'-hydroxy group of hypoxysordarin would be constructed by an iterative type I PKS sdnO and the trans-acting polyketide methyltransferase sdnL. SdnL would be responsible for the introduction of an alpha-methyl group of the polyketide chain. Alternatively, the beta-lactamase-like protein sdnR might be responsible for the cleavage and transfer of the polyketide chain from the PKS sdnO to sordarin. Two putative cytochrome P450 monooxygenases, sdnQ and sdnT, might catalyze the epoxidations of the polyketide chain to complete the biosynthesis of hypoxysordarin. Transcriptional regulators sdnM and sdnS are presumably encoded for the transcriptional regulation of the expression of the sdn gene cluster. In Sordaria araneosa (Pleurage araneosa), this protein is Methyltransferase sdnD.